We begin with the raw amino-acid sequence, 299 residues long: tRNA pseudouridine synthase B (299 aa).

Residue aspartate 38 is the Nucleophile of the active site.

Belongs to the pseudouridine synthase TruB family. Type 1 subfamily.

The enzyme catalyses uridine(55) in tRNA = pseudouridine(55) in tRNA. Responsible for synthesis of pseudouridine from uracil-55 in the psi GC loop of transfer RNAs. The protein is tRNA pseudouridine synthase B of Pediococcus pentosaceus (strain ATCC 25745 / CCUG 21536 / LMG 10740 / 183-1w).